We begin with the raw amino-acid sequence, 306 residues long: MALRHFLTLRDLSTLELNRILERASELKKMQQSNKVYQPFVGKVLGMIFEKSSTRTRISFEAGINQFGGSAIFLSPRDTQLGRGEPIEDSARVISSMLDIVMIRTFGHDIVERFASYSKVPVINGLTDDHHPCQLLADLQTYIEHRGSIEGKTVAWIGDGNNMCNSYIEAAHMMGFKLKIASPKGYEPKPEFLAEFGHCVELFDNAEDAAVNADLIVTDVWASMGQEEEQKLREKAFADFQVNEKLMGLAHPDCLFMHCLPAHRGEEISETMLDHKNAVVWDEAENRLHAQKALMEFLLNENLKKA.

Carbamoyl phosphate-binding positions include 53-56 (STRT), Gln80, Arg104, and 131-134 (HPCQ). L-ornithine is bound by residues Asn162, Asp219, and 223-224 (SM). Carbamoyl phosphate contacts are provided by residues 259 to 260 (CL) and Arg287.

It belongs to the aspartate/ornithine carbamoyltransferase superfamily. OTCase family.

The protein localises to the cytoplasm. The catalysed reaction is carbamoyl phosphate + L-ornithine = L-citrulline + phosphate + H(+). It participates in amino-acid biosynthesis; L-arginine biosynthesis; L-arginine from L-ornithine and carbamoyl phosphate: step 1/3. In terms of biological role, reversibly catalyzes the transfer of the carbamoyl group from carbamoyl phosphate (CP) to the N(epsilon) atom of ornithine (ORN) to produce L-citrulline. The polypeptide is Ornithine carbamoyltransferase (Acinetobacter baumannii (strain ATCC 17978 / DSM 105126 / CIP 53.77 / LMG 1025 / NCDC KC755 / 5377)).